Consider the following 697-residue polypeptide: Polyribonucleotide nucleotidyltransferase (697 aa).

Positions 487 and 493 each coordinate Mg(2+). The KH domain maps to 554–613; sequence PRIETIQIKPSKIAVVIGPGGKQIRAIIEQTGVQIDIDDTGLVNIAAIDLVSIEKAKAII. The S1 motif domain occupies 623–691; sequence GRIYSGKAIS…ERGQIKLSRK (69 aa).

This sequence belongs to the polyribonucleotide nucleotidyltransferase family. The cofactor is Mg(2+).

Its subcellular location is the cytoplasm. The catalysed reaction is RNA(n+1) + phosphate = RNA(n) + a ribonucleoside 5'-diphosphate. In terms of biological role, involved in mRNA degradation. Catalyzes the phosphorolysis of single-stranded polyribonucleotides processively in the 3'- to 5'-direction. This Protochlamydia amoebophila (strain UWE25) protein is Polyribonucleotide nucleotidyltransferase.